The primary structure comprises 1957 residues: Chromatin modification-related protein EAF1 A (1957 aa).

4 disordered regions span residues 108-208 (ASPH…TDLV), 261-287 (NRVS…GSKT), 323-373 (GGSP…SHAN), and 449-469 (NQSH…ETEK). Basic and acidic residues predominate over residues 140–151 (SENKSVEGERNL). Polar residues-rich tracts occupy residues 261 to 270 (NRVSSNSLNT), 333 to 342 (GQKNSSTQLN), and 355 to 372 (TNRG…SSHA). One can recognise an HSA domain in the interval 563-641 (CGTAPVEVRE…LSNAILQFWS (79 aa)). Disordered stretches follow at residues 833 to 909 (GSNS…AVQK) and 928 to 950 (AETS…DQTW). Polar residues predominate over residues 884–898 (TDASSGDTSSFQDEY). The SANT domain occupies 1049-1105 (SGNPWSLFEDQALVVLVHDMGPNWELISDAMNSTLKIKCIYRNPTECKDRHKILMDK). Disordered regions lie at residues 1107–1131 (AGDG…PGIP), 1282–1314 (TPVL…GLQS), 1344–1367 (LSGR…DRGH), 1449–1644 (QGNS…QQLN), 1687–1768 (PVRP…IAPA), 1804–1840 (ELSK…PQAS), and 1876–1957 (SSNT…TKVE). Polar residues-rich tracts occupy residues 1116–1125 (DSGNSQSYPS), 1290–1314 (AHPS…GLQS), 1344–1358 (LSGR…STPA), 1459–1472 (SNLS…TTPV), 1479–1492 (LSQQ…SHVL), and 1501–1510 (QSPSQATGAQ). 2 stretches are compositionally biased toward low complexity: residues 1523-1534 (QRYLQQQQQQQQ) and 1545-1562 (VQQP…NSPQ). The span at 1563 to 1579 (TQPPVSPQPLSMPPVSP) shows a compositional bias: pro residues. Composition is skewed to polar residues over residues 1582–1595 (NINA…QKSQ), 1604–1618 (SPQS…QAGK), 1635–1644 (RQPTQGQQLN), 1691–1722 (DQQS…QQLP), and 1734–1758 (QQQM…CNIL). Positions 1759–1768 (STSSPSIAPA) are enriched in low complexity. Residues 1805-1815 (LSKKSQAERMP) are compositionally biased toward basic and acidic residues. 2 stretches are compositionally biased toward polar residues: residues 1819–1832 (QSVT…SMGT) and 1876–1894 (SSNT…NQGL). Basic and acidic residues-rich tracts occupy residues 1913–1922 (SEEKRPKLPE) and 1932–1942 (LASEEQPHLEE).

It belongs to the EAF1 family. Component of the NuA4 histone acetyltransferase complex. Interacts with ARP4 and SWC4, and (via HSA domain) with TAF14 and TAF14B. As to expression, expressed in leaves.

The protein resides in the nucleus. Functionally, component of the NuA4 histone acetyltransferase complex which is involved in transcriptional activation of selected genes principally by acetylation of nucleosomal histone H4 and H2A. This chain is Chromatin modification-related protein EAF1 A (EAF1A), found in Arabidopsis thaliana (Mouse-ear cress).